A 351-amino-acid polypeptide reads, in one-letter code: uncharacterized protein (351 aa).

Positions 215, 226, 290, 319, and 333 each coordinate Mn(2+).

The protein belongs to the peptidase M24B family. The cofactor is Mn(2+).

This is an uncharacterized protein from Staphylococcus aureus (strain bovine RF122 / ET3-1).